We begin with the raw amino-acid sequence, 456 residues long: GTPase Der (456 aa).

2 consecutive EngA-type G domains span residues 2–167 and 176–351; these read LKVA…DQFG and ATFC…AQLK. Residues 8-15, 55-59, 118-121, 182-189, 229-233, and 294-297 contribute to the GTP site; these read GKPNVGKS, DTGGL, NKIE, DTAGI, and NKWD. The 85-residue stretch at 352–436 folds into the KH-like domain; that stretch reads IKISTSLLND…PITLYFKSKN (85 aa).

This sequence belongs to the TRAFAC class TrmE-Era-EngA-EngB-Septin-like GTPase superfamily. EngA (Der) GTPase family. As to quaternary structure, associates with the 50S ribosomal subunit.

In terms of biological role, GTPase that plays an essential role in the late steps of ribosome biogenesis. The chain is GTPase Der from Mycoplasmoides gallisepticum (strain R(low / passage 15 / clone 2)) (Mycoplasma gallisepticum).